The sequence spans 98 residues: MSMVYFNILMAFIVSFVGLLMYRSHLMSSLLCLEGMMLSLFVMMSVTILNNHFTLASMAPIILLVFAACEAALGLSLLVMVSNTYGTDYVQNLNLLQC.

3 helical membrane-spanning segments follow: residues 1 to 21 (MSMV…GLLM), 29 to 49 (SLLC…VTIL), and 61 to 81 (IILL…LVMV).

It belongs to the complex I subunit 4L family. As to quaternary structure, core subunit of respiratory chain NADH dehydrogenase (Complex I) which is composed of 45 different subunits.

It localises to the mitochondrion inner membrane. It carries out the reaction a ubiquinone + NADH + 5 H(+)(in) = a ubiquinol + NAD(+) + 4 H(+)(out). Its function is as follows. Core subunit of the mitochondrial membrane respiratory chain NADH dehydrogenase (Complex I) which catalyzes electron transfer from NADH through the respiratory chain, using ubiquinone as an electron acceptor. Part of the enzyme membrane arm which is embedded in the lipid bilayer and involved in proton translocation. The sequence is that of NADH-ubiquinone oxidoreductase chain 4L (MT-ND4L) from Eumetopias jubatus (Steller sea lion).